Consider the following 316-residue polypeptide: Thymidylate synthase (316 aa).

Residues arginine 23 and arginine 178–arginine 179 each bind dUMP. The Nucleophile role is filled by cysteine 198. Residues arginine 218–aspartate 221, asparagine 229, and histidine 259–tyrosine 261 contribute to the dUMP site. Aspartate 221 contacts (6R)-5,10-methylene-5,6,7,8-tetrahydrofolate. Alanine 315 contributes to the (6R)-5,10-methylene-5,6,7,8-tetrahydrofolate binding site.

It belongs to the thymidylate synthase family. Bacterial-type ThyA subfamily. Homodimer.

The protein localises to the cytoplasm. It catalyses the reaction dUMP + (6R)-5,10-methylene-5,6,7,8-tetrahydrofolate = 7,8-dihydrofolate + dTMP. It functions in the pathway pyrimidine metabolism; dTTP biosynthesis. Catalyzes the reductive methylation of 2'-deoxyuridine-5'-monophosphate (dUMP) to 2'-deoxythymidine-5'-monophosphate (dTMP) while utilizing 5,10-methylenetetrahydrofolate (mTHF) as the methyl donor and reductant in the reaction, yielding dihydrofolate (DHF) as a by-product. This enzymatic reaction provides an intracellular de novo source of dTMP, an essential precursor for DNA biosynthesis. This Lacticaseibacillus casei (Lactobacillus casei) protein is Thymidylate synthase.